Here is a 290-residue protein sequence, read N- to C-terminus: 3-hydroxyacyl-thioester dehydratase Y (290 aa).

The disordered stretch occupies residues 147-169 (FGGARGERPAAPEFPDRHPDARI). Basic and acidic residues predominate over residues 151-169 (RGERPAAPEFPDRHPDARI). The 111-residue stretch at 161–271 (PDRHPDARID…AVFRTEVAGS (111 aa)) folds into the MaoC-like domain.

The protein belongs to the enoyl-CoA hydratase/isomerase family.

It carries out the reaction a (3R)-3-hydroxyacyl-CoA = a (2E)-enoyl-CoA + H2O. The catalysed reaction is (3R)-hydroxyhexanoyl-CoA = (2E)-hexenoyl-CoA + H2O. The enzyme catalyses (2E)-octenoyl-CoA + H2O = (3R)-hydroxyoctanoyl-CoA. It catalyses the reaction (3R)-3-hydroxydecanoyl-CoA = (2E)-decenoyl-CoA + H2O. It carries out the reaction (3R)-3-hydroxydodecanoyl-CoA = (2E)-dodecenoyl-CoA + H2O. The catalysed reaction is (3R)-hydroxyhexadecanoyl-CoA = (2E)-hexadecenoyl-CoA + H2O. Functionally, shows trans-enoyl-CoA hydratase/3-hydroxyacyl-CoA dehydratase activity. In vitro, can hydrate various enoyl-CoA such as (2E)-hexenoyl-CoA, (2E)-octenoyl-CoA, (2E)-decenoyl-CoA, (2E)-dodecenoyl-CoA and (2E)-hexadecenoyl-CoA. May contribute to the persistence of the tuberculosis infection by inducing COX-2 expression in macrophages through MAPK-NF-kappaB signaling pathway. The protein is 3-hydroxyacyl-thioester dehydratase Y of Mycobacterium tuberculosis (strain ATCC 25618 / H37Rv).